Here is a 648-residue protein sequence, read N- to C-terminus: FAD-binding monooxygenase trt3 (648 aa).

Residues 118 to 121 (TWYW), 130 to 131 (DI), and tyrosine 136 each bind FAD. An NADP(+)-binding site is contributed by 128 to 130 (MCD). Residues 274–280 (TGSTAVQ) and 297–298 (RT) each bind NADP(+).

Belongs to the FAD-binding monooxygenase family. The cofactor is FAD.

It participates in secondary metabolite biosynthesis; terpenoid biosynthesis. Functionally, FAD-binding monooxygenase; part of the gene cluster that mediates the biosynthesis of terretonin, a fungal meroterpenoid that acts as a mycotoxin. The first step of the pathway is the synthesis of 3,5-dimethylorsellinic acid (DMOA) by the polyketide synthase trt4. DMOA is then prenylated into farnesyl-DMOA by the polyprenyl transferase trt2. Methylation by the methyltransferase trt5 then leads to farnesyl-DMOA methyl ester which is further subject to epoxidation by the FAD-dependent monooxygenase trt8 to yield epoxyfarnesyl-DMOA methyl ester. Cyclization of epoxyfarnesyl-DMOA methyl ester by the terpene cyclase trt1 leads to a tetracycle intermediate which is in turn converted to preterretonin. Dehydrogenase trt9 comes next to transform preterretonin to preterrenoid. The FAD-dependent monooxygenase trt3 is then required for the C-hydroxylation at C16 of preterrenoid to yield terrenoid. The cytochrome P450 trt6 catalyzes three successive oxidations to transform terrenoid into an unstable intermediate, which then undergoes the D-ring expansion and unusual rearrangement of the methoxy group to afford the core skeleton of terretonin. Trt14 catalyzes the D-ring expansion of terretonin involving intramolecular methoxy rearrangement as well as the hydrolysis of the expanded D-ring and the methyl ester moiety. Finally, the nonheme iron-dependent dioxygenase trt7 accomplishes the last two oxidation reactions steps to complete the biosynthesis of terretonin. Terretonin C is produced via spontaneous decarboxylation of the terretonin precursor. Another shunt product of the terretonin biosynthesis is dihydrofarnesyl-DMOA, derived from epoxyfarnesyl-DMOA through hydrolysis of the epoxide. The sequence is that of FAD-binding monooxygenase trt3 from Aspergillus terreus (strain NIH 2624 / FGSC A1156).